The chain runs to 99 residues: Nucleoid-associated protein SPN23F10240 (99 aa).

Belongs to the YbaB/EbfC family. In terms of assembly, homodimer.

Its subcellular location is the cytoplasm. The protein localises to the nucleoid. Its function is as follows. Binds to DNA and alters its conformation. May be involved in regulation of gene expression, nucleoid organization and DNA protection. The protein is Nucleoid-associated protein SPN23F10240 of Streptococcus pneumoniae (strain ATCC 700669 / Spain 23F-1).